The primary structure comprises 491 residues: 3-octaprenyl-4-hydroxybenzoate carboxy-lyase (491 aa).

N172 provides a ligand contact to Mn(2+). Residues 175–177 (IYR), 189–191 (RWL), and 194–195 (RG) each bind prenylated FMN. Residue E238 participates in Mn(2+) binding. The Proton donor role is filled by D287.

It belongs to the UbiD family. As to quaternary structure, homohexamer. Requires prenylated FMN as cofactor. Mn(2+) is required as a cofactor.

Its subcellular location is the cell membrane. The catalysed reaction is a 4-hydroxy-3-(all-trans-polyprenyl)benzoate + H(+) = a 2-(all-trans-polyprenyl)phenol + CO2. It participates in cofactor biosynthesis; ubiquinone biosynthesis. In terms of biological role, catalyzes the decarboxylation of 3-octaprenyl-4-hydroxy benzoate to 2-octaprenylphenol, an intermediate step in ubiquinone biosynthesis. The polypeptide is 3-octaprenyl-4-hydroxybenzoate carboxy-lyase (Histophilus somni (strain 2336) (Haemophilus somnus)).